A 414-amino-acid polypeptide reads, in one-letter code: Secernin-1 (414 aa).

At Ala2 the chain carries N-acetylalanine. Cys9 is a catalytic residue.

Belongs to the peptidase C69 family. Secernin subfamily.

It is found in the cytoplasm. Functionally, regulates exocytosis in mast cells. Increases both the extent of secretion and the sensitivity of mast cells to stimulation with calcium. This Homo sapiens (Human) protein is Secernin-1 (SCRN1).